The following is a 692-amino-acid chain: MKNLLKKFFGQLQRIGKALMLPVAILPAAGILLTFGNAMHNEQILHFAPWMQHHYIQLISQIMEASGQVIFDNLPLLFAMGTALGLAGGDGVAGIAALVGYLIMSATMGKIAGITIDDIFSYADGAKTLGQSAKDPAHALVLGIPTLQTGVFGGIIIGALAAWCYNKFYNIQLPQFLGFFAGKRFVPIITSLVAIVTGIVLSFVWPPVQDGLNNLSNFLLGKNLALTTFIFGIIERSLIPFGLHHIFYAPFWFEFGHYVNESGNLVRGDQRIWMAQYQDGVPFTAGAFTTGKYPFMMFGLPAAAFAIYRQAKPERRKVVGGLMLSAALTSFLTGITEPLEFSFLFVAPILYVAHVILAGTSFLIMHLLHVQIGMTFSGGFIDYILYGLLSWDRSNALLVIPVGIAYALIYYFLFTFLIKKLNLKTPGREDKEVESKDVSVSELPFEVLEAMGNKDNIKHLDACITRLRVEVRDKGLVDVEKLKQLGASGVLEVGNNMQAIFGPKSDQIKHDMQQIMDGKITSPAETTVTEDGDVETAEIVAEGGAVIYAPITGEAVDLSEVPDKVFSAKMMGDGIAIKPETGEVVAPFDGKVKMIFPTKHAIGLESKDGIELLIHFGLETVKLDGEGFEILVKENDNIVLGQPLMKVDLNYIKEHADDTITPIIITNAGSANIEVLHTGKVEQGEKLLLVNN.

The PTS EIIC type-1 domain maps to 6 to 430; that stretch reads KKFFGQLQRI…LNLKTPGRED (425 aa). The next 10 helical transmembrane spans lie at 15-35, 84-104, 140-160, 185-205, 215-235, 287-307, 318-338, 344-364, 370-390, and 398-418; these read IGKALMLPVAILPAAGILLTF, LGLAGGDGVAGIAALVGYLIM, LVLGIPTLQTGVFGGIIIGAL, FVPIITSLVAIVTGIVLSFVW, LSNFLLGKNLALTTFIFGIIE, AFTTGKYPFMMFGLPAAAFAI, VVGGLMLSAALTSFLTGITEP, LFVAPILYVAHVILAGTSFLI, VQIGMTFSGGFIDYILYGLLS, and LVIPVGIAYALIYYFLFTFLI. Residues 441 to 522 form the PTS EIIB type-1 domain; the sequence is SELPFEVLEA…QQIMDGKITS (82 aa). Cys463 acts as the Phosphocysteine intermediate; for EIIB activity in catalysis. The region spanning 563 to 667 is the PTS EIIA type-1 domain; it reads DKVFSAKMMG…DTITPIIITN (105 aa). His615 functions as the Tele-phosphohistidine intermediate; for EIIA activity in the catalytic mechanism.

The protein resides in the cell membrane. Its activity is regulated as follows. Inhibited by methyl alpha-D-glucoside, methyl beta-D-glucoside, p-nitrophenyl alpha-D-glucoside, o-nitrophenyl beta-D-glucoside and salicin, but not by 2-deoxyglucose. Its function is as follows. The phosphoenolpyruvate-dependent sugar phosphotransferase system (sugar PTS), a major carbohydrate active -transport system, catalyzes the phosphorylation of incoming sugar substrates concomitantly with their translocation across the cell membrane. This system is involved in alpha- and beta-glucoside transport. Can also transport glucose, but not galactose, fructose, mannose, cellobiose, sucrose, maltose, lactose, melibiose and trehalose, as well as N-acetylglucosamine. The sequence is that of PTS system glucoside-specific EIICBA component (glcB) from Staphylococcus carnosus (strain TM300).